Reading from the N-terminus, the 440-residue chain is Adenylosuccinate synthetase 1, chloroplastic (440 aa).

Residues 13–19 (GDEGKGK) and 41–43 (GHT) each bind GTP. The active-site Proton acceptor is aspartate 14. Residues aspartate 14 and glycine 41 each contribute to the Mg(2+) site. Residues 14 to 17 (DEGK), 39 to 42 (NAGH), threonine 135, arginine 149, glutamine 230, threonine 245, and arginine 313 each bind IMP. Residue histidine 42 is the Proton donor of the active site. Position 309–315 (309–315 (TVTRRKR)) interacts with substrate. GTP is bound by residues arginine 315 and 341 to 343 (KLD).

Belongs to the adenylosuccinate synthetase family. As to quaternary structure, homodimer. Requires Mg(2+) as cofactor.

It is found in the plastid. Its subcellular location is the chloroplast. The enzyme catalyses IMP + L-aspartate + GTP = N(6)-(1,2-dicarboxyethyl)-AMP + GDP + phosphate + 2 H(+). Its pathway is purine metabolism; AMP biosynthesis via de novo pathway; AMP from IMP: step 1/2. Its function is as follows. Plays an important role in the de novo pathway and in the salvage pathway of purine nucleotide biosynthesis. Catalyzes the first committed step in the biosynthesis of AMP from IMP. In Ricinus communis (Castor bean), this protein is Adenylosuccinate synthetase 1, chloroplastic.